A 384-amino-acid chain; its full sequence is MSTLVQCGYFERGQCQSCRHIKLPMAQQLAAKTQELQQLLAPFVDNAEPQFLPPVVGDSSGFRNKAKMVALGAAHAPVLGIVSPSGEAVSLCDCLLYPADMQALLHRLERFVQQAGIPPYRVDKAKGELKFILLTRSQVRGEYMLRFVLRSRDAIARIERELPALMAEYPQIKVVSVNLQPVHMAILEGEEEIFLTENTRLEERFNDVPLFIRPKSFFQTNPQVAAKLYQTAREWVADFAPASLWDLFCGVGGFGLHCAAKDIPLTGIEIEAEAIACAKMSAQLMGLDKVQFMALDSTDFAKGDAAQTKPELIIVNPPRRGIGESLCHSLSEFAPKAILYSSCNPKTLAKDLGHIRGYRLTKVQLFDLFPHSDHFEVLALLVKD.

Positions 7, 15, 18, and 94 each coordinate [4Fe-4S] cluster. Residues Gln-219, Phe-248, Glu-269, and Asn-316 each contribute to the S-adenosyl-L-methionine site. Cys-343 serves as the catalytic Nucleophile.

It belongs to the class I-like SAM-binding methyltransferase superfamily. RNA M5U methyltransferase family. RlmC subfamily.

The catalysed reaction is uridine(747) in 23S rRNA + S-adenosyl-L-methionine = 5-methyluridine(747) in 23S rRNA + S-adenosyl-L-homocysteine + H(+). Catalyzes the formation of 5-methyl-uridine at position 747 (m5U747) in 23S rRNA. This Shewanella sp. (strain MR-4) protein is 23S rRNA (uracil(747)-C(5))-methyltransferase RlmC.